A 422-amino-acid polypeptide reads, in one-letter code: UDP-N-acetylglucosamine 1-carboxyvinyltransferase (422 aa).

22–23 (KN) is a phosphoenolpyruvate binding site. Arginine 95 is a binding site for UDP-N-acetyl-alpha-D-glucosamine. The active-site Proton donor is cysteine 119. Cysteine 119 is subject to 2-(S-cysteinyl)pyruvic acid O-phosphothioketal. Residues 124 to 128 (RPIDQ), aspartate 309, and valine 331 contribute to the UDP-N-acetyl-alpha-D-glucosamine site.

This sequence belongs to the EPSP synthase family. MurA subfamily.

It localises to the cytoplasm. It catalyses the reaction phosphoenolpyruvate + UDP-N-acetyl-alpha-D-glucosamine = UDP-N-acetyl-3-O-(1-carboxyvinyl)-alpha-D-glucosamine + phosphate. Its pathway is cell wall biogenesis; peptidoglycan biosynthesis. Cell wall formation. Adds enolpyruvyl to UDP-N-acetylglucosamine. This chain is UDP-N-acetylglucosamine 1-carboxyvinyltransferase, found in Anaeromyxobacter dehalogenans (strain 2CP-1 / ATCC BAA-258).